A 175-amino-acid polypeptide reads, in one-letter code: Alkyl hydroperoxide reductase AhpD (175 aa).

Cys-131 acts as the Proton donor in catalysis. A disulfide bridge links Cys-131 with Cys-134. The active-site Cysteine sulfenic acid (-SOH) intermediate is the Cys-134.

This sequence belongs to the AhpD family.

The catalysed reaction is N(6)-[(R)-dihydrolipoyl]-L-lysyl-[lipoyl-carrier protein] + a hydroperoxide = N(6)-[(R)-lipoyl]-L-lysyl-[lipoyl-carrier protein] + an alcohol + H2O. Its function is as follows. Antioxidant protein with alkyl hydroperoxidase activity. Required for the reduction of the AhpC active site cysteine residues and for the regeneration of the AhpC enzyme activity. In Brucella anthropi (strain ATCC 49188 / DSM 6882 / CCUG 24695 / JCM 21032 / LMG 3331 / NBRC 15819 / NCTC 12168 / Alc 37) (Ochrobactrum anthropi), this protein is Alkyl hydroperoxide reductase AhpD.